The following is a 283-amino-acid chain: Shikimate kinase (283 aa).

An ATP-binding site is contributed by 86 to 96 (PIKSGLSSSSA).

It belongs to the GHMP kinase family. Archaeal shikimate kinase subfamily.

Its subcellular location is the cytoplasm. It catalyses the reaction shikimate + ATP = 3-phosphoshikimate + ADP + H(+). Its pathway is metabolic intermediate biosynthesis; chorismate biosynthesis; chorismate from D-erythrose 4-phosphate and phosphoenolpyruvate: step 5/7. The protein is Shikimate kinase of Methanococcus maripaludis (strain C6 / ATCC BAA-1332).